Here is a 446-residue protein sequence, read N- to C-terminus: Gamma-glutamyl phosphate reductase (446 aa).

The protein belongs to the gamma-glutamyl phosphate reductase family.

It is found in the cytoplasm. The catalysed reaction is L-glutamate 5-semialdehyde + phosphate + NADP(+) = L-glutamyl 5-phosphate + NADPH + H(+). It functions in the pathway amino-acid biosynthesis; L-proline biosynthesis; L-glutamate 5-semialdehyde from L-glutamate: step 2/2. Functionally, catalyzes the NADPH-dependent reduction of L-glutamate 5-phosphate into L-glutamate 5-semialdehyde and phosphate. The product spontaneously undergoes cyclization to form 1-pyrroline-5-carboxylate. This is Gamma-glutamyl phosphate reductase from Sulfurihydrogenibium sp. (strain YO3AOP1).